The primary structure comprises 454 residues: Chromosomal replication initiator protein DnaA (454 aa).

Residues 1 to 76 (MNKLKTDLNL…IGASFRILAK (76 aa)) form a domain I, interacts with DnaA modulators region. The tract at residues 76–113 (KNPKIIFAQESPGNGEKATGKKIKSLPREDKSSIFESK) is domain II. Residues 114 to 330 (GLNTKFSFEN…GALNRLCAYA (217 aa)) form a domain III, AAA+ region region. Residues glycine 158, glycine 160, lysine 161, and threonine 162 each coordinate ATP. A domain IV, binds dsDNA region spans residues 331-454 (SIHKEGKITL…KITEQLTSSQ (124 aa)).

It belongs to the DnaA family. Oligomerizes as a right-handed, spiral filament on DNA at oriC.

It localises to the cytoplasm. Plays an essential role in the initiation and regulation of chromosomal replication. ATP-DnaA binds to the origin of replication (oriC) to initiate formation of the DNA replication initiation complex once per cell cycle. Binds the DnaA box (a 9 base pair repeat at the origin) and separates the double-stranded (ds)DNA. Forms a right-handed helical filament on oriC DNA; dsDNA binds to the exterior of the filament while single-stranded (ss)DNA is stabiized in the filament's interior. The ATP-DnaA-oriC complex binds and stabilizes one strand of the AT-rich DNA unwinding element (DUE), permitting loading of DNA polymerase. After initiation quickly degrades to an ADP-DnaA complex that is not apt for DNA replication. Binds acidic phospholipids. In Methylacidiphilum infernorum (isolate V4) (Methylokorus infernorum (strain V4)), this protein is Chromosomal replication initiator protein DnaA.